We begin with the raw amino-acid sequence, 166 residues long: Probable protein tyrosine phosphatase type IVA A (166 aa).

Positions 10–164 (NPASLVESST…YKSKKKSSCR (155 aa)) constitute a Tyrosine-protein phosphatase domain. An intrachain disulfide couples C52 to C107. D75 acts as the Proton donor in catalysis. C107 acts as the Phosphocysteine intermediate in catalysis. 108-113 (VAGLGR) is a binding site for phosphate. R113 provides a ligand contact to substrate. At C163 the chain carries Cysteine methyl ester. C163 carries the S-farnesyl cysteine lipid modification. Positions 164-166 (RIM) are cleaved as a propeptide — removed in mature form.

This sequence belongs to the protein-tyrosine phosphatase family.

The protein localises to the membrane. It catalyses the reaction O-phospho-L-tyrosyl-[protein] + H2O = L-tyrosyl-[protein] + phosphate. In Dictyostelium discoideum (Social amoeba), this protein is Probable protein tyrosine phosphatase type IVA A.